The primary structure comprises 342 residues: Pyrophosphate--fructose 6-phosphate 1-phosphotransferase (342 aa).

Residue glycine 10 participates in diphosphate binding. Glutamate 103 provides a ligand contact to Mg(2+). Residues 126–128 (TID), arginine 163, 170–172 (MGR), glutamate 222, arginine 266, and 272–275 (HVQR) contribute to the substrate site. Aspartate 128 acts as the Proton acceptor in catalysis.

Belongs to the phosphofructokinase type A (PFKA) family. Mixed-substrate PFK group III subfamily. As to quaternary structure, homodimer or homotetramer. Mg(2+) is required as a cofactor.

Its subcellular location is the cytoplasm. It carries out the reaction beta-D-fructose 6-phosphate + diphosphate = beta-D-fructose 1,6-bisphosphate + phosphate + H(+). It participates in carbohydrate degradation; glycolysis; D-glyceraldehyde 3-phosphate and glycerone phosphate from D-glucose: step 3/4. Non-allosteric. Its function is as follows. Catalyzes the phosphorylation of D-fructose 6-phosphate, the first committing step of glycolysis. Uses inorganic phosphate (PPi) as phosphoryl donor instead of ATP like common ATP-dependent phosphofructokinases (ATP-PFKs), which renders the reaction reversible, and can thus function both in glycolysis and gluconeogenesis. Consistently, PPi-PFK can replace the enzymes of both the forward (ATP-PFK) and reverse (fructose-bisphosphatase (FBPase)) reactions. The polypeptide is Pyrophosphate--fructose 6-phosphate 1-phosphotransferase (Streptomyces coelicolor (strain ATCC BAA-471 / A3(2) / M145)).